We begin with the raw amino-acid sequence, 206 residues long: Thymidylate kinase (206 aa).

Residue 11 to 18 participates in ATP binding; sequence GIDGAGKT.

This sequence belongs to the thymidylate kinase family.

The enzyme catalyses dTMP + ATP = dTDP + ADP. Functionally, phosphorylation of dTMP to form dTDP in both de novo and salvage pathways of dTTP synthesis. The protein is Thymidylate kinase of Burkholderia pseudomallei (strain 1106a).